Reading from the N-terminus, the 361-residue chain is Phospho-N-acetylmuramoyl-pentapeptide-transferase (361 aa).

Transmembrane regions (helical) follow at residues 28–48, 74–94, 99–119, 133–153, 168–188, 203–223, 236–256, 263–283, 288–308, and 338–358; these read LAIIITLSLSFITGPILIKFL, TMGGIMIILSSCLSTLLLADL, IWITLFGFISFGIIGFMDDYA, SKLLLQGIISFIICVLLEYLD, LSLDLGYFYIVFAMFVIVGSS, VPIAFTAGSFALISYLVGNLI, TGELTVLCAGLVGSCLGFLWF, VFMGDTGSLSLGGVLGIISVI, IVLAIVGGLFVIETTSVILQV, and KVVIRFWIISVIFALIGLSSL.

The protein belongs to the glycosyltransferase 4 family. MraY subfamily. It depends on Mg(2+) as a cofactor.

Its subcellular location is the cell membrane. The enzyme catalyses UDP-N-acetyl-alpha-D-muramoyl-L-alanyl-gamma-D-glutamyl-meso-2,6-diaminopimeloyl-D-alanyl-D-alanine + di-trans,octa-cis-undecaprenyl phosphate = di-trans,octa-cis-undecaprenyl diphospho-N-acetyl-alpha-D-muramoyl-L-alanyl-D-glutamyl-meso-2,6-diaminopimeloyl-D-alanyl-D-alanine + UMP. It functions in the pathway cell wall biogenesis; peptidoglycan biosynthesis. Catalyzes the initial step of the lipid cycle reactions in the biosynthesis of the cell wall peptidoglycan: transfers peptidoglycan precursor phospho-MurNAc-pentapeptide from UDP-MurNAc-pentapeptide onto the lipid carrier undecaprenyl phosphate, yielding undecaprenyl-pyrophosphoryl-MurNAc-pentapeptide, known as lipid I. The protein is Phospho-N-acetylmuramoyl-pentapeptide-transferase of Rickettsia montanensis.